The sequence spans 182 residues: ATP synthase subunit delta (182 aa).

It belongs to the ATPase delta chain family. In terms of assembly, F-type ATPases have 2 components, F(1) - the catalytic core - and F(0) - the membrane proton channel. F(1) has five subunits: alpha(3), beta(3), gamma(1), delta(1), epsilon(1). F(0) has three main subunits: a(1), b(2) and c(10-14). The alpha and beta chains form an alternating ring which encloses part of the gamma chain. F(1) is attached to F(0) by a central stalk formed by the gamma and epsilon chains, while a peripheral stalk is formed by the delta and b chains.

Its subcellular location is the cell inner membrane. Its function is as follows. F(1)F(0) ATP synthase produces ATP from ADP in the presence of a proton or sodium gradient. F-type ATPases consist of two structural domains, F(1) containing the extramembraneous catalytic core and F(0) containing the membrane proton channel, linked together by a central stalk and a peripheral stalk. During catalysis, ATP synthesis in the catalytic domain of F(1) is coupled via a rotary mechanism of the central stalk subunits to proton translocation. In terms of biological role, this protein is part of the stalk that links CF(0) to CF(1). It either transmits conformational changes from CF(0) to CF(1) or is implicated in proton conduction. The polypeptide is ATP synthase subunit delta (Hydrogenobaculum sp. (strain Y04AAS1)).